Here is a 57-residue protein sequence, read N- to C-terminus: Preprotein translocase subunit SecG (57 aa).

Residues M1–D33 are Cytoplasmic-facing. The helical transmembrane segment at P34–I55 threads the bilayer. At P56–P57 the chain is on the extracellular side.

It belongs to the SEC61-beta family. As to quaternary structure, component of the protein translocase complex. Heterotrimer consisting of alpha (SecY), beta (SecG) and gamma (SecE) subunits. Can form oligomers of the heterotrimer.

The protein localises to the cell membrane. In terms of biological role, involved in protein export. The function of the beta subunit is unknown, but it may be involved in stabilization of the trimeric complex. This is Preprotein translocase subunit SecG from Metallosphaera sedula (strain ATCC 51363 / DSM 5348 / JCM 9185 / NBRC 15509 / TH2).